The following is a 111-amino-acid chain: Short neuropeptide F (111 aa).

Residues 1–24 (MSAMYAKRCAALVLLVVTVGLVNA) form the signal peptide. The propeptide occupies 25–76 (TENYMDYGEEMAEKTPAENIHELYRLLLQRNTLDNAGFGGIPLEHLMIRKSQ). Phe85 carries the post-translational modification Phenylalanine amide. Positions 88–111 (SGPHVSARALPRPMGAVAGYDDNN) are excised as a propeptide.

Expressed throughout the central nervous system (at protein level).

It localises to the secreted. Functionally, plays a role in controlling food intake and regulating body size. This is Short neuropeptide F from Camponotus floridanus (Florida carpenter ant).